The following is a 138-amino-acid chain: Ribosome-binding factor A (138 aa).

Residues 112-138 (EARTQGQAPAADVEPAPGAAPDDEAEE) are disordered. Residues 119–131 (APAADVEPAPGAA) are compositionally biased toward low complexity.

This sequence belongs to the RbfA family. As to quaternary structure, monomer. Binds 30S ribosomal subunits, but not 50S ribosomal subunits or 70S ribosomes.

Its subcellular location is the cytoplasm. In terms of biological role, one of several proteins that assist in the late maturation steps of the functional core of the 30S ribosomal subunit. Associates with free 30S ribosomal subunits (but not with 30S subunits that are part of 70S ribosomes or polysomes). Required for efficient processing of 16S rRNA. May interact with the 5'-terminal helix region of 16S rRNA. The chain is Ribosome-binding factor A from Anaeromyxobacter sp. (strain K).